A 93-amino-acid polypeptide reads, in one-letter code: Islet amyloid polypeptide (93 aa).

The N-terminal stretch at Met-1 to Ala-23 is a signal peptide. A propeptide spanning residues Thr-24–Asp-35 is cleaved from the precursor. A disulfide bond links Cys-39 and Cys-44. A disordered region spans residues Leu-64–Val-93. Tyr-74 is modified (tyrosine amide). A propeptide spanning residues Asn-78 to Val-93 is cleaved from the precursor. Over residues Pro-83–Val-93 the composition is skewed to basic and acidic residues.

It belongs to the calcitonin family. Can form homodimers. Interacts with IDE and INS. Interaction with INS inhibits homodimerization and fibril formation.

The protein resides in the secreted. Amylin/IAPP is a glucoregulatory peptide hormone that plays an important role in the regulation of energy homeostasis. Selectively inhibits insulin-stimulated glucose utilization and glycogen deposition in muscle, while not affecting adipocyte glucose metabolism. IAPP function is mediated by the CALCR-RAMPs (AMYRs) receptor complexes. Amylin can also bind CALCR receptor in the absence of RAMPs, although it is more selective for AMYRs. The sequence is that of Islet amyloid polypeptide from Mus musculus (Mouse).